Here is a 460-residue protein sequence, read N- to C-terminus: GTPase Der (460 aa).

EngA-type G domains follow at residues 2 to 164 (QSII…HEEF) and 196 to 368 (IRVG…ENFT). GTP is bound by residues 8–15 (GKPNVGKS), 55–59 (DSGGL), 116–119 (NKVD), 202–209 (GRVNVGKS), 249–253 (DTAGI), and 313–316 (NKWD). The region spanning 369-453 (QKIQTSKLNT…PLVIASRKKG (85 aa)) is the KH-like domain.

Belongs to the TRAFAC class TrmE-Era-EngA-EngB-Septin-like GTPase superfamily. EngA (Der) GTPase family. Associates with the 50S ribosomal subunit.

In terms of biological role, GTPase that plays an essential role in the late steps of ribosome biogenesis. This Campylobacter jejuni subsp. jejuni serotype O:6 (strain 81116 / NCTC 11828) protein is GTPase Der.